The following is a 542-amino-acid chain: Propane 2-monooxygenase, hydroxylase component large subunit (542 aa).

Fe cation is bound by residues E97, E127, H130, E192, E226, and H229.

Belongs to the TmoA/XamoA family. The propane 2-monooxygenase multicomponent enzyme system is composed of an electron transfer component and a monooxygenase component interacting with the effector protein MimD. The electron transfer component is composed of a reductase (MimB), and the monooxygenase component is formed by a large subunit (MimA) and a small subunit (MimC). Requires the presence of the chaperonin-like protein MimG to ensure a productive folding, resulting of a soluble MimA, which leads to the active form of MimABCD. Fe(2+) serves as cofactor.

The catalysed reaction is propane + NADH + O2 + H(+) = propan-2-ol + NAD(+) + H2O. It carries out the reaction acetone + NADH + O2 + H(+) = hydroxyacetone + NAD(+) + H2O. The enzyme catalyses butan-2-one + NADH + O2 + H(+) = 1-hydroxy-2-butanone + NAD(+) + H2O. It catalyses the reaction phenol + NADH + O2 + H(+) = hydroquinone + NAD(+) + H2O. In terms of biological role, component of the propane 2-monooxygenase multicomponent enzyme system which is involved in the degradation of propane via the O2-dependent hydroxylation of propane. Also involved in the degradation of acetone via the O2-dependent hydroxylation of acetone. Also able to catalyze the oxidation of phenol, methylethylketone (2-butanone), 1-propanol and 2-propanol. The polypeptide is Propane 2-monooxygenase, hydroxylase component large subunit (Mycolicibacterium smegmatis (strain ATCC 700084 / mc(2)155) (Mycobacterium smegmatis)).